The primary structure comprises 466 residues: CCA-adding enzyme (466 aa).

Residues serine 55 and arginine 58 each coordinate ATP. CTP contacts are provided by serine 55 and arginine 58. Residues aspartate 67, aspartate 69, and aspartate 118 each coordinate Mg(2+). Residues histidine 141, lysine 161, and tyrosine 170 each coordinate ATP. The CTP site is built by histidine 141, lysine 161, and tyrosine 170.

It belongs to the tRNA nucleotidyltransferase/poly(A) polymerase family. Archaeal CCA-adding enzyme subfamily. In terms of assembly, homodimer. Mg(2+) is required as a cofactor.

The catalysed reaction is a tRNA precursor + 2 CTP + ATP = a tRNA with a 3' CCA end + 3 diphosphate. The enzyme catalyses a tRNA with a 3' CCA end + 2 CTP + ATP = a tRNA with a 3' CCACCA end + 3 diphosphate. Catalyzes the addition and repair of the essential 3'-terminal CCA sequence in tRNAs without using a nucleic acid template. Adds these three nucleotides in the order of C, C, and A to the tRNA nucleotide-73, using CTP and ATP as substrates and producing inorganic pyrophosphate. tRNA 3'-terminal CCA addition is required both for tRNA processing and repair. Also involved in tRNA surveillance by mediating tandem CCA addition to generate a CCACCA at the 3' terminus of unstable tRNAs. While stable tRNAs receive only 3'-terminal CCA, unstable tRNAs are marked with CCACCA and rapidly degraded. This Haloarcula marismortui (strain ATCC 43049 / DSM 3752 / JCM 8966 / VKM B-1809) (Halobacterium marismortui) protein is CCA-adding enzyme.